Consider the following 351-residue polypeptide: tRNA pseudouridine synthase D (351 aa).

Catalysis depends on D96, which acts as the Nucleophile. One can recognise a TRUD domain in the interval 174–304 (GAPNYFGPQR…MKPERRPLVA (131 aa)). Positions 244-268 (VLPGEPEPSGAGPTGPLWGDGGTLA) are disordered.

This sequence belongs to the pseudouridine synthase TruD family.

It catalyses the reaction uridine(13) in tRNA = pseudouridine(13) in tRNA. Its function is as follows. Responsible for synthesis of pseudouridine from uracil-13 in transfer RNAs. The polypeptide is tRNA pseudouridine synthase D (Marinobacter nauticus (strain ATCC 700491 / DSM 11845 / VT8) (Marinobacter aquaeolei)).